Reading from the N-terminus, the 144-residue chain is 3-dehydroquinate dehydratase (144 aa).

The active-site Proton acceptor is Y22. N73, H79, and D86 together coordinate substrate. H99 (proton donor) is an active-site residue. Residues 100–101 and R110 each bind substrate; that span reads LS.

It belongs to the type-II 3-dehydroquinase family. Homododecamer.

It carries out the reaction 3-dehydroquinate = 3-dehydroshikimate + H2O. Its pathway is metabolic intermediate biosynthesis; chorismate biosynthesis; chorismate from D-erythrose 4-phosphate and phosphoenolpyruvate: step 3/7. Its function is as follows. Catalyzes a trans-dehydration via an enolate intermediate. The chain is 3-dehydroquinate dehydratase from Herpetosiphon aurantiacus (strain ATCC 23779 / DSM 785 / 114-95).